The chain runs to 101 residues: Protein Tat (101 aa).

Residues 1 to 12 (MDPVDPRLEPWK) are compositionally biased toward basic and acidic residues. Positions 1 to 20 (MDPVDPRLEPWKHPGSQPKA) are disordered. An interaction with human CREBBP region spans residues 1–24 (MDPVDPRLEPWKHPGSQPKAACTS). The segment at 1-48 (MDPVDPRLEPWKHPGSQPKAACTSCYCKKCCFHCQVCFTTKGLGISYG) is transactivation. C22, C25, and C27 together coordinate Zn(2+). Residues 22 to 37 (CTSCYCKKCCFHCQVC) form a cysteine-rich region. An N6-acetyllysine; by host PCAF modification is found at K28. Residues C30, H33, C34, and C37 each coordinate Zn(2+). A core region spans residues 38–48 (FTTKGLGISYG). The span at 48–57 (GRKKRRQRRR) shows a compositional bias: basic residues. The disordered stretch occupies residues 48-101 (GRKKRRQRRRAPQDSQTHQVSLPKQPASQARGDPTGPKESKKKVERETETDPVD). The short motif at 49-57 (RKKRRQRRR) is the Nuclear localization signal, RNA-binding (TAR), and protein transduction element. The interval 49 to 86 (RKKRRQRRRAPQDSQTHQVSLPKQPASQARGDPTGPKE) is interaction with the host capping enzyme RNGTT. N6-acetyllysine; by host EP300 and GCN5L2 occurs at positions 50 and 51. R52 and R53 each carry asymmetric dimethylarginine; by host PRMT6. The segment covering 60-75 (QDSQTHQVSLPKQPAS) has biased composition (polar residues). Residue K71 forms a Glycyl lysine isopeptide (Lys-Gly) (interchain with G-Cter in ubiquitin) linkage. A Cell attachment site motif is present at residues 78-80 (RGD). Positions 83–101 (GPKESKKKVERETETDPVD) are enriched in basic and acidic residues.

This sequence belongs to the lentiviruses Tat family. As to quaternary structure, interacts with host CCNT1. Associates with the P-TEFb complex composed at least of Tat, P-TEFb (CDK9 and CCNT1), TAR RNA, RNA Pol II. Recruits the HATs CREBBP, TAF1/TFIID, EP300, PCAF and GCN5L2. Interacts with host KAT5/Tip60; this interaction targets the latter to degradation. Interacts with the host deacetylase SIRT1. Interacts with host capping enzyme RNGTT; this interaction stimulates RNGTT. Binds to host KDR, and to the host integrins ITGAV/ITGB3 and ITGA5/ITGB1. Interacts with host KPNB1/importin beta-1 without previous binding to KPNA1/importin alpha-1. Interacts with EIF2AK2. Interacts with host nucleosome assembly protein NAP1L1; this interaction may be required for the transport of Tat within the nucleus, since the two proteins interact at the nuclear rim. Interacts with host C1QBP/SF2P32; this interaction involves lysine-acetylated Tat. Interacts with the host chemokine receptors CCR2, CCR3 and CXCR4. Interacts with host DPP4/CD26; this interaction may trigger an anti-proliferative effect. Interacts with host LDLR. Interacts with the host extracellular matrix metalloproteinase MMP1. Interacts with host PRMT6; this interaction mediates Tat's methylation. Interacts with, and is ubiquitinated by MDM2/Hdm2. Interacts with host PSMC3 and HTATIP2. Interacts with STAB1; this interaction may overcome SATB1-mediated repression of IL2 and IL2RA (interleukin) in T cells by binding to the same domain than HDAC1. Interacts (when acetylated) with human CDK13, thereby increasing HIV-1 mRNA splicing and promoting the production of the doubly spliced HIV-1 protein Nef. Interacts with host TBP; this interaction modulates the activity of transcriptional pre-initiation complex. Interacts with host RELA. Interacts with host PLSCR1; this interaction negatively regulates Tat transactivation activity by altering its subcellular distribution. Post-translationally, asymmetrical arginine methylation by host PRMT6 seems to diminish the transactivation capacity of Tat and affects the interaction with host CCNT1. In terms of processing, acetylation by EP300, CREBBP, GCN5L2/GCN5 and PCAF regulates the transactivation activity of Tat. EP300-mediated acetylation of Lys-50 promotes dissociation of Tat from the TAR RNA through the competitive binding to PCAF's bromodomain. In addition, the non-acetylated Tat's N-terminus can also interact with PCAF. PCAF-mediated acetylation of Lys-28 enhances Tat's binding to CCNT1. Lys-50 is deacetylated by SIRT1. Polyubiquitination by host MDM2 does not target Tat to degradation, but activates its transactivation function and fosters interaction with CCNT1 and TAR RNA. Post-translationally, phosphorylated by EIF2AK2 on serine and threonine residues adjacent to the basic region important for TAR RNA binding and function. Phosphorylation of Tat by EIF2AK2 is dependent on the prior activation of EIF2AK2 by dsRNA.

The protein resides in the host nucleus. It is found in the host nucleolus. It localises to the host cytoplasm. The protein localises to the secreted. In terms of biological role, transcriptional activator that increases RNA Pol II processivity, thereby increasing the level of full-length viral transcripts. Recognizes a hairpin structure at the 5'-LTR of the nascent viral mRNAs referred to as the transactivation responsive RNA element (TAR) and recruits the cyclin T1-CDK9 complex (P-TEFb complex) that will in turn hyperphosphorylate the RNA polymerase II to allow efficient elongation. The CDK9 component of P-TEFb and other Tat-activated kinases hyperphosphorylate the C-terminus of RNA Pol II that becomes stabilized and much more processive. Other factors such as HTATSF1/Tat-SF1, SUPT5H/SPT5, and HTATIP2 are also important for Tat's function. Besides its effect on RNA Pol II processivity, Tat induces chromatin remodeling of proviral genes by recruiting the histone acetyltransferases (HATs) CREBBP, EP300 and PCAF to the chromatin. This also contributes to the increase in proviral transcription rate, especially when the provirus integrates in transcriptionally silent region of the host genome. To ensure maximal activation of the LTR, Tat mediates nuclear translocation of NF-kappa-B by interacting with host RELA. Through its interaction with host TBP, Tat may also modulate transcription initiation. Tat can reactivate a latently infected cell by penetrating in it and transactivating its LTR promoter. In the cytoplasm, Tat is thought to act as a translational activator of HIV-1 mRNAs. Extracellular circulating Tat can be endocytosed by surrounding uninfected cells via the binding to several surface receptors such as CD26, CXCR4, heparan sulfate proteoglycans (HSPG) or LDLR. Neurons are rarely infected, but they internalize Tat via their LDLR. Through its interaction with nuclear HATs, Tat is potentially able to control the acetylation-dependent cellular gene expression. Modulates the expression of many cellular genes involved in cell survival, proliferation or in coding for cytokines or cytokine receptors. Tat plays a role in T-cell and neurons apoptosis. Tat induced neurotoxicity and apoptosis probably contribute to neuroAIDS. Circulating Tat also acts as a chemokine-like and/or growth factor-like molecule that binds to specific receptors on the surface of the cells, affecting many cellular pathways. In the vascular system, Tat binds to ITGAV/ITGB3 and ITGA5/ITGB1 integrins dimers at the surface of endothelial cells and competes with bFGF for heparin-binding sites, leading to an excess of soluble bFGF. This chain is Protein Tat, found in Homo sapiens (Human).